The chain runs to 290 residues: GTPase Era (290 aa).

The Era-type G domain maps to 2 to 169 (KSGFAAILGR…KNKIYENFSE (168 aa)). Positions 10-17 (GRPSTGKS) are G1. A GTP-binding site is contributed by 10–17 (GRPSTGKS). Residues 36–40 (QTTRN) are G2. The G3 stretch occupies residues 57-60 (DTPG). Residues 57 to 61 (DTPGF) and 119 to 122 (NKVD) contribute to the GTP site. The interval 119–122 (NKVD) is G4. A G5 region spans residues 148–150 (ISA). The region spanning 200 to 276 (LKEELPYSLY…NLFLQVKLKK (77 aa)) is the KH type-2 domain.

The protein belongs to the TRAFAC class TrmE-Era-EngA-EngB-Septin-like GTPase superfamily. Era GTPase family. Monomer.

The protein resides in the cytoplasm. Its subcellular location is the cell inner membrane. In terms of biological role, an essential GTPase that binds both GDP and GTP, with rapid nucleotide exchange. Plays a role in 16S rRNA processing and 30S ribosomal subunit biogenesis and possibly also in cell cycle regulation and energy metabolism. The sequence is that of GTPase Era from Borreliella afzelii (strain PKo) (Borrelia afzelii).